Reading from the N-terminus, the 940-residue chain is MDDYKDTLNLPKTLFSMRGNLSKKEPNILKSWNENNLYKLIRKKNQEKKIFFLHDGPPYANGNIHIGHAVNKILKDIIIKSKNMSGFDAPYIPSWDCHGLPIEQKVEEKIKSNQGEISTTEFQEKCRKYAQDQVEKQKKDFIRLGVIGDWDNPHLTMNFKNEANIIKTLSKIVQKKHLYQDFKPIHWCLKCASSLSEAEIEYSKKKSDSIIVGFKFKYRSIIEKLFDFQISNKKEIHLLIWTTTPWTLPSSKAISIHPDFQYQLIETERCYLIIAKELVEKTLNTLKIKKSIIRNYVKGRFLEKMICLHPFLKNIDLPVILGKHVTLESGTGAVHTAPDHGLEDYIISQKYNIKTSNIVNFKGEYISNTHDKLDGVNVLEANSIIIELLIKNNTFFHHESLIHSYPHCWRHKSPVIYRATPQWFIDIDQKQLRIKLLQEIKKVRWIPEWGESRIGEMIKKRPDWCISRQRKWGVPMSIFIHKNTRKIHPNTFVFMKKIAKKVELEGLQVWWNIDSKEILGEEYQSYEKILDILDVWFESGNTHTTINYKNKNYTKKNADMFLEGSDQHRGWFMSSLIISTLISEKKPYSEVLTHGFVVDGKGQKMSKSIGNTISPNEIVDTLGADILRLWVASSNYSNDISISNEILKSSSDIYRRIRNTARFMLANISDFDPKKNIISKENMVLLDKWAIGQTKIVQEEIIQHYNNYNFHAVIQRLMYFCSIEMGSFYLDIIKDRQYTLKKHSQERRSSQTAIYYIINSLVRWIAPILSFTADEIWSYLPENNSQYVFMEEWFDKLFYLDQDDLFNYQFWNEIITIKHEINKFLEEAIQNKTINNSLETSIILYVSHELSNKLKILEQETKFIFLTSDIQIKLYDTAPKNAKKSKIVPYLKVSLEKIKGKKCPRCWHYFNFTKKNIKNSDICNRCILNTIGNGEKRIFI.

The 'HIGH' region motif lies at 58–68 (PYANGNIHIGH). An L-isoleucyl-5'-AMP-binding site is contributed by E563. Positions 604–608 (KMSKS) match the 'KMSKS' region motif. K607 is an ATP binding site. Residues C903, C906, C923, and C926 each coordinate Zn(2+).

It belongs to the class-I aminoacyl-tRNA synthetase family. IleS type 1 subfamily. In terms of assembly, monomer. Zn(2+) serves as cofactor.

The protein resides in the cytoplasm. It catalyses the reaction tRNA(Ile) + L-isoleucine + ATP = L-isoleucyl-tRNA(Ile) + AMP + diphosphate. Functionally, catalyzes the attachment of isoleucine to tRNA(Ile). As IleRS can inadvertently accommodate and process structurally similar amino acids such as valine, to avoid such errors it has two additional distinct tRNA(Ile)-dependent editing activities. One activity is designated as 'pretransfer' editing and involves the hydrolysis of activated Val-AMP. The other activity is designated 'posttransfer' editing and involves deacylation of mischarged Val-tRNA(Ile). The sequence is that of Isoleucine--tRNA ligase from Buchnera aphidicola subsp. Acyrthosiphon pisum (strain 5A).